The primary structure comprises 361 residues: Tryptophan--tRNA ligase, mitochondrial (361 aa).

Residues 1-16 constitute a mitochondrion transit peptide; it reads MAKLPKITSLLPHSRV. ATP is bound by residues Q21 and 27-30; that span reads HIGN. The 'HIGH' region signature appears at 22-30; the sequence is PTGIPHIGN. L-tryptophan is bound at residue D165. Residues 177-179, 225-229, and K228 contribute to the ATP site; these read GKD and KMSKS. Positions 225–229 match the 'KMSKS' region motif; that stretch reads KMSKS.

This sequence belongs to the class-I aminoacyl-tRNA synthetase family. In terms of assembly, homodimer.

It is found in the mitochondrion matrix. The catalysed reaction is tRNA(Trp) + L-tryptophan + ATP = L-tryptophyl-tRNA(Trp) + AMP + diphosphate + H(+). The sequence is that of Tryptophan--tRNA ligase, mitochondrial from Schizosaccharomyces pombe (strain 972 / ATCC 24843) (Fission yeast).